Here is a 204-residue protein sequence, read N- to C-terminus: GTP cyclohydrolase 1 (204 aa).

Zn(2+)-binding residues include C93, H96, and C164.

This sequence belongs to the GTP cyclohydrolase I family. In terms of assembly, toroid-shaped homodecamer, composed of two pentamers of five dimers.

It carries out the reaction GTP + H2O = 7,8-dihydroneopterin 3'-triphosphate + formate + H(+). Its pathway is cofactor biosynthesis; 7,8-dihydroneopterin triphosphate biosynthesis; 7,8-dihydroneopterin triphosphate from GTP: step 1/1. The polypeptide is GTP cyclohydrolase 1 (Rhizobium meliloti (strain 1021) (Ensifer meliloti)).